Here is a 406-residue protein sequence, read N- to C-terminus: Cysteine desulfurase (406 aa).

An N6-(pyridoxal phosphate)lysine modification is found at lysine 226. Cysteine 364 functions as the Cysteine persulfide intermediate in the catalytic mechanism.

It belongs to the class-V pyridoxal-phosphate-dependent aminotransferase family. Csd subfamily. In terms of assembly, homodimer. Interacts with SufE and the SufBCD complex composed of SufB, SufC and SufD. The interaction with SufE is required to mediate the direct transfer of the sulfur atom from the S-sulfanylcysteine. Pyridoxal 5'-phosphate is required as a cofactor.

It localises to the cytoplasm. The catalysed reaction is (sulfur carrier)-H + L-cysteine = (sulfur carrier)-SH + L-alanine. The enzyme catalyses L-selenocysteine + AH2 = hydrogenselenide + L-alanine + A + H(+). The protein operates within cofactor biosynthesis; iron-sulfur cluster biosynthesis. In terms of biological role, cysteine desulfurases mobilize the sulfur from L-cysteine to yield L-alanine, an essential step in sulfur metabolism for biosynthesis of a variety of sulfur-containing biomolecules. Component of the suf operon, which is activated and required under specific conditions such as oxidative stress and iron limitation. Acts as a potent selenocysteine lyase in vitro, that mobilizes selenium from L-selenocysteine. Selenocysteine lyase activity is however unsure in vivo. The protein is Cysteine desulfurase of Escherichia coli O127:H6 (strain E2348/69 / EPEC).